Here is a 137-residue protein sequence, read N- to C-terminus: Fatty acid-binding protein homolog 7 (137 aa).

It belongs to the calycin superfamily. Fatty-acid binding protein (FABP) family.

The chain is Fatty acid-binding protein homolog 7 (lbp-7) from Caenorhabditis elegans.